Reading from the N-terminus, the 146-residue chain is Ecotin-like protein 1 (146 aa).

The protein belongs to the protease inhibitor I11 (ecotin) family.

This chain is Ecotin-like protein 1 (ISP1), found in Leishmania infantum.